The following is a 314-amino-acid chain: Ribosomal RNA small subunit methyltransferase H (314 aa).

Residues 35 to 37 (GGH), D55, F79, D101, and Q108 each bind S-adenosyl-L-methionine.

The protein belongs to the methyltransferase superfamily. RsmH family.

Its subcellular location is the cytoplasm. It carries out the reaction cytidine(1402) in 16S rRNA + S-adenosyl-L-methionine = N(4)-methylcytidine(1402) in 16S rRNA + S-adenosyl-L-homocysteine + H(+). Specifically methylates the N4 position of cytidine in position 1402 (C1402) of 16S rRNA. This Pectobacterium carotovorum subsp. carotovorum (strain PC1) protein is Ribosomal RNA small subunit methyltransferase H.